Consider the following 257-residue polypeptide: UPF0246 protein BAV2675 (257 aa).

This sequence belongs to the UPF0246 family.

This Bordetella avium (strain 197N) protein is UPF0246 protein BAV2675.